The primary structure comprises 149 residues: Proline-rich acidic protein 1 (149 aa).

The signal sequence occupies residues 1–20 (MKRFLLATCLVAALLWEAGA). Disordered regions lie at residues 51-79 (EPLEKDNQLGPLLPEPKQKPAAAEEKRPD) and 97-122 (LQGPELDLDSIDHPMSDDVQDEEVPQ). Over residues 66-79 (PKQKPAAAEEKRPD) the composition is skewed to basic and acidic residues.

Interacts with MTTP. Interacts with MAD1L1. In terms of tissue distribution, predominantly expressed in the intestinal epithelial cells than in the liver (at protein level). Abundantly expressed in the uterus during late pregnancy by uterus epithelial cells. After birth expression rapidly decreases and is no longer found in the uterus by the third day. Also highly expressed in the small intestine where it shows a proximal-distal graded expression.

It is found in the secreted. Its subcellular location is the endoplasmic reticulum. In terms of biological role, lipid-binding protein which promotes lipid absorption by facilitating MTTP-mediated lipid transfer (mainly triglycerides and phospholipids) and MTTP-mediated apoB lipoprotein assembly and secretion. Protects the gastrointestinal epithelium from irradiation-induced apoptosis. May play an important role in maintaining normal growth homeostasis in epithelial cells. Involved in p53/TP53-dependent cell survival after DNA damage. In Mus musculus (Mouse), this protein is Proline-rich acidic protein 1 (Prap1).